Consider the following 371-residue polypeptide: Ecto-ADP-ribosyltransferase 3 (371 aa).

Residues 1–26 (MKMGHFEMVTTLLAAAVLMDIFQVKA) form the signal peptide. Cysteine 43 and cysteine 255 are disulfide-bonded. The TR mART core domain maps to 64–250 (ALLRMVWDNA…LVLQSINSTC (187 aa)). NAD(+) is bound by residues tyrosine 101 and asparagine 182. Residues 306 to 346 (VLQTEENPLLPDEKPDRSRGKANNPTPGLVPGPKSHPSASS) are disordered. The GPI-anchor amidated serine moiety is linked to residue serine 345. A propeptide spans 346 to 371 (SGNTLLPSVMASTILLVASAVNFIEL) (removed in mature form).

Belongs to the Arg-specific ADP-ribosyltransferase family.

The protein localises to the cell membrane. It catalyses the reaction L-arginyl-[protein] + NAD(+) = N(omega)-(ADP-D-ribosyl)-L-arginyl-[protein] + nicotinamide + H(+). This Mus musculus (Mouse) protein is Ecto-ADP-ribosyltransferase 3 (Art3).